We begin with the raw amino-acid sequence, 386 residues long: Acyl-[acyl-carrier-protein] dehydrogenase MbtN (386 aa).

This sequence belongs to the acyl-CoA dehydrogenase family. It depends on FAD as a cofactor.

It functions in the pathway siderophore biosynthesis; mycobactin biosynthesis. Functionally, catalyzes the dehydrogenation at the alpha-beta position of ACP-bound acyl chains. This results in the introduction of a double bond in the lipidic chain, which is further transferred to the epsilon-amino group of lysine residue in the mycobactin core by MbtK. This Mycobacterium bovis (strain ATCC BAA-935 / AF2122/97) protein is Acyl-[acyl-carrier-protein] dehydrogenase MbtN (mbtN).